The sequence spans 910 residues: Protein translocase subunit SecA (910 aa).

Residues Gln86, 104 to 108, and Asp499 each bind ATP; that span reads GEGKT. 4 residues coordinate Zn(2+): Cys894, Cys896, Cys905, and His906.

The protein belongs to the SecA family. In terms of assembly, monomer and homodimer. Part of the essential Sec protein translocation apparatus which comprises SecA, SecYEG and auxiliary proteins SecDF-YajC and YidC. Zn(2+) is required as a cofactor.

The protein resides in the cell inner membrane. It localises to the cytoplasm. It carries out the reaction ATP + H2O + cellular proteinSide 1 = ADP + phosphate + cellular proteinSide 2.. Functionally, part of the Sec protein translocase complex. Interacts with the SecYEG preprotein conducting channel. Has a central role in coupling the hydrolysis of ATP to the transfer of proteins into and across the cell membrane, serving both as a receptor for the preprotein-SecB complex and as an ATP-driven molecular motor driving the stepwise translocation of polypeptide chains across the membrane. This is Protein translocase subunit SecA from Rickettsia bellii (strain RML369-C).